The chain runs to 410 residues: Argininosuccinate synthase (410 aa).

ATP-binding positions include 10 to 18 and Ala-37; that span reads AYSGGLDTS. The L-citrulline site is built by Tyr-90 and Ser-95. ATP is bound at residue Gly-120. Positions 122, 126, and 127 each coordinate L-aspartate. L-citrulline is bound at residue Asn-126. Residues Arg-130, Ser-182, Ser-191, Glu-267, and Tyr-279 each coordinate L-citrulline.

This sequence belongs to the argininosuccinate synthase family. Type 1 subfamily. Homotetramer.

The protein resides in the cytoplasm. It catalyses the reaction L-citrulline + L-aspartate + ATP = 2-(N(omega)-L-arginino)succinate + AMP + diphosphate + H(+). It functions in the pathway amino-acid biosynthesis; L-arginine biosynthesis; L-arginine from L-ornithine and carbamoyl phosphate: step 2/3. This Polynucleobacter asymbioticus (strain DSM 18221 / CIP 109841 / QLW-P1DMWA-1) (Polynucleobacter necessarius subsp. asymbioticus) protein is Argininosuccinate synthase.